A 289-amino-acid polypeptide reads, in one-letter code: Nitrogenase iron protein (289 aa).

8-15 (GKGGIGKS) serves as a coordination point for ATP. Residue C96 participates in [4Fe-4S] cluster binding. An ADP-ribosylarginine; by dinitrogenase reductase ADP-ribosyltransferase modification is found at R99. A [4Fe-4S] cluster-binding site is contributed by C130.

It belongs to the NifH/BchL/ChlL family. Homodimer. Requires [4Fe-4S] cluster as cofactor. Post-translationally, the reversible ADP-ribosylation of Arg-99 inactivates the nitrogenase reductase and regulates nitrogenase activity.

It catalyses the reaction N2 + 8 reduced [2Fe-2S]-[ferredoxin] + 16 ATP + 16 H2O = H2 + 8 oxidized [2Fe-2S]-[ferredoxin] + 2 NH4(+) + 16 ADP + 16 phosphate + 6 H(+). Functionally, the key enzymatic reactions in nitrogen fixation are catalyzed by the nitrogenase complex, which has 2 components: the iron protein and the molybdenum-iron protein. This chain is Nitrogenase iron protein, found in Parafrankia sp. (strain EAN1pec).